Consider the following 451-residue polypeptide: UDP-N-acetylmuramoylalanine--D-glutamate ligase (451 aa).

119-125 is an ATP binding site; the sequence is GSNGKTT.

This sequence belongs to the MurCDEF family.

It localises to the cytoplasm. The catalysed reaction is UDP-N-acetyl-alpha-D-muramoyl-L-alanine + D-glutamate + ATP = UDP-N-acetyl-alpha-D-muramoyl-L-alanyl-D-glutamate + ADP + phosphate + H(+). The protein operates within cell wall biogenesis; peptidoglycan biosynthesis. Its function is as follows. Cell wall formation. Catalyzes the addition of glutamate to the nucleotide precursor UDP-N-acetylmuramoyl-L-alanine (UMA). The polypeptide is UDP-N-acetylmuramoylalanine--D-glutamate ligase (Geobacillus sp. (strain WCH70)).